Reading from the N-terminus, the 459-residue chain is MTNYAIILAAGKGTRMKSDLPKVLHQVAGLTMLEHVKRAVDTMNPAKTVTVVGHKAELVQKVLEDQSEFVLQSEQLGTGHAVMMAESSLAELEGQTLVIAGDTPLIRGESLKNLLHYHKSHKNVATILTAEADDPFGYGRIIRNQNAEVIKIVEQKDASDYEQQVKEINTGTYVFDNKRLFEALKEINTNNAQGEYYLTDVISIFKEADEKVGAYKLADFDESLGVNDRVALAKAEKVMRRRINHAHMVNGVTLTNPASTYIDSDVIIAPDVVIEANVTLKGQTKIETGAVLTNGTYIVDSVIGENTVITHSMIEASRIEKNVTVGPYAHLRPNSVLEEAVHVGNFVEVKASTLGKETKAGHLTYIGNAEVGHDVNFGAGTITVNYDGQNKYKTIIGNHVFVGSNSTIIAPLTIGDNALTAAGSTIHKDVPVDSIAIGRGRQVNKEGYAKKKPHHPNNK.

Residues 1 to 229 (MTNYAIILAA…FDESLGVNDR (229 aa)) are pyrophosphorylase. UDP-N-acetyl-alpha-D-glucosamine-binding positions include 8–11 (LAAG), K22, Q72, and 77–78 (GT). D102 contacts Mg(2+). 4 residues coordinate UDP-N-acetyl-alpha-D-glucosamine: G139, E154, N169, and N227. N227 is a binding site for Mg(2+). A linker region spans residues 230 to 250 (VALAKAEKVMRRRINHAHMVN). The segment at 251–459 (GVTLTNPAST…KKKPHHPNNK (209 aa)) is N-acetyltransferase. Residues R332 and K350 each coordinate UDP-N-acetyl-alpha-D-glucosamine. The active-site Proton acceptor is H362. 2 residues coordinate UDP-N-acetyl-alpha-D-glucosamine: Y365 and N376. Residues A379, 385–386 (NY), S404, A422, and R439 each bind acetyl-CoA.

The protein in the N-terminal section; belongs to the N-acetylglucosamine-1-phosphate uridyltransferase family. This sequence in the C-terminal section; belongs to the transferase hexapeptide repeat family. Homotrimer. It depends on Mg(2+) as a cofactor.

The protein localises to the cytoplasm. It carries out the reaction alpha-D-glucosamine 1-phosphate + acetyl-CoA = N-acetyl-alpha-D-glucosamine 1-phosphate + CoA + H(+). It catalyses the reaction N-acetyl-alpha-D-glucosamine 1-phosphate + UTP + H(+) = UDP-N-acetyl-alpha-D-glucosamine + diphosphate. It participates in nucleotide-sugar biosynthesis; UDP-N-acetyl-alpha-D-glucosamine biosynthesis; N-acetyl-alpha-D-glucosamine 1-phosphate from alpha-D-glucosamine 6-phosphate (route II): step 2/2. The protein operates within nucleotide-sugar biosynthesis; UDP-N-acetyl-alpha-D-glucosamine biosynthesis; UDP-N-acetyl-alpha-D-glucosamine from N-acetyl-alpha-D-glucosamine 1-phosphate: step 1/1. Its pathway is bacterial outer membrane biogenesis; LPS lipid A biosynthesis. Its function is as follows. Catalyzes the last two sequential reactions in the de novo biosynthetic pathway for UDP-N-acetylglucosamine (UDP-GlcNAc). The C-terminal domain catalyzes the transfer of acetyl group from acetyl coenzyme A to glucosamine-1-phosphate (GlcN-1-P) to produce N-acetylglucosamine-1-phosphate (GlcNAc-1-P), which is converted into UDP-GlcNAc by the transfer of uridine 5-monophosphate (from uridine 5-triphosphate), a reaction catalyzed by the N-terminal domain. This is Bifunctional protein GlmU from Streptococcus mutans serotype c (strain ATCC 700610 / UA159).